The following is a 1105-amino-acid chain: Tubulin-folding cofactor D (1105 aa).

N-linked (GlcNAc...) asparagine glycans are attached at residues Asn-122 and Asn-126. HEAT repeat units lie at residues 308–345, 347–385, 401–446, and 452–489; these read IYLEVIVDFLLSSVSDIDSFVRWSAAKGLAKIISRLPW, LAEQVIDAIIELMTENMFLNPIENTVNISITSPLVWHGA, SKCL…CYSK, and LQTNLILCLLQTVLFDNEINVRRAATAALFEVIGRHAS. N-linked (GlcNAc...) asparagine glycosylation occurs at Asn-373. Residues Asn-721, Asn-883, and Asn-1083 are each glycosylated (N-linked (GlcNAc...) asparagine).

As to quaternary structure, interacts with alp21.

Its subcellular location is the cytoplasm. The protein resides in the cytoskeleton. In terms of biological role, has a function in the folding of beta-tubulin. Microtubule-associated protein that is essential to direct polarized cell growth and to position the nucleus and septum to the center of the cell during mitosis. In Schizosaccharomyces pombe (strain 972 / ATCC 24843) (Fission yeast), this protein is Tubulin-folding cofactor D (alp1).